Reading from the N-terminus, the 749-residue chain is NAD(P)H-quinone oxidoreductase subunit 5, chloroplastic (749 aa).

A run of 17 helical transmembrane segments spans residues 9-29, 40-60, 89-109, 125-145, 147-167, 185-205, 219-239, 258-278, 290-312, 327-347, 354-374, 396-416, 425-445, 549-569, 608-628, 694-714, and 725-745; these read WIIP…LLLF, WAFQ…NLSI, IDPL…MVLI, FAYM…SNLI, IYIF…FWFT, GDFG…SFEF, NEVN…GAVA, TPIS…FLVA, IMNF…ALAQ, LGYM…FHLI, ALLF…VGYC, TSFL…CFWS, WLYS…TAFY, LFPI…GIPF, VFSV…YKPV, IIDG…EVIK, and LFFY…LNVF.

This sequence belongs to the complex I subunit 5 family. In terms of assembly, NDH is composed of at least 16 different subunits, 5 of which are encoded in the nucleus.

The protein resides in the plastid. Its subcellular location is the chloroplast thylakoid membrane. The enzyme catalyses a plastoquinone + NADH + (n+1) H(+)(in) = a plastoquinol + NAD(+) + n H(+)(out). It catalyses the reaction a plastoquinone + NADPH + (n+1) H(+)(in) = a plastoquinol + NADP(+) + n H(+)(out). In terms of biological role, NDH shuttles electrons from NAD(P)H:plastoquinone, via FMN and iron-sulfur (Fe-S) centers, to quinones in the photosynthetic chain and possibly in a chloroplast respiratory chain. The immediate electron acceptor for the enzyme in this species is believed to be plastoquinone. Couples the redox reaction to proton translocation, and thus conserves the redox energy in a proton gradient. The protein is NAD(P)H-quinone oxidoreductase subunit 5, chloroplastic (ndhF) of Atractylodes lancea (Atractylodes japonica).